A 289-amino-acid chain; its full sequence is MQRLVARAPAKVNLTLRILRRRPDGFHDLASIVAFAGACDVVTLESDAPLGLAVAGPSAAAAGPDADNLILRAADAFARHVPGARLGRFTLTKRLPVAAGIGGGSSDAAAALRLLAQINDIALDDPRLHAAAREVGADVPVCLDPQARIMEGIGERLSEPLGLAPLFAVLVNCRVPVPTADVFRTLGLRAGEDLAGLPHEAPMSTGRAAVMRHLVLHGNDLEPPAETVAPEITRVKAMLAQEPEVRLVRMSGSGATVFALTDDCRAAAQVARRVAAAEPGWWVRPTVLR.

Lys-11 is a catalytic residue. 96-106 (PVAAGIGGGSS) is an ATP binding site. Asp-138 is a catalytic residue.

The protein belongs to the GHMP kinase family. IspE subfamily.

The catalysed reaction is 4-CDP-2-C-methyl-D-erythritol + ATP = 4-CDP-2-C-methyl-D-erythritol 2-phosphate + ADP + H(+). It functions in the pathway isoprenoid biosynthesis; isopentenyl diphosphate biosynthesis via DXP pathway; isopentenyl diphosphate from 1-deoxy-D-xylulose 5-phosphate: step 3/6. Its function is as follows. Catalyzes the phosphorylation of the position 2 hydroxy group of 4-diphosphocytidyl-2C-methyl-D-erythritol. This is 4-diphosphocytidyl-2-C-methyl-D-erythritol kinase from Azorhizobium caulinodans (strain ATCC 43989 / DSM 5975 / JCM 20966 / LMG 6465 / NBRC 14845 / NCIMB 13405 / ORS 571).